The sequence spans 1736 residues: Hybrid signal transduction histidine kinase I (1736 aa).

Residues 143–161 show a composition bias toward low complexity; that stretch reads HNINNNQNNQNSVNINSSN. The interval 143–171 is disordered; sequence HNINNNQNNQNSVNINSSNKGQYNRPEPS. A PAC domain is found at 234–286; that stretch reads FEYPLRINRKNDNLVRYIQLKGEIIKKDDKVFKVLGVCHDFSEIQEAKDKLEE. A PAS domain is found at 287–358; it reads ESKFVEALIG…QINLEKSGTP (72 aa). Positions 378–469 are disordered; the sequence is TSNQQQSSLS…NTTNGIGGAT (92 aa). A compositionally biased stretch (low complexity) spans 379–389; the sequence is SNQQQSSLSKS. Positions 392–412 are enriched in polar residues; that stretch reads PRSQSNCSNGNKSQNRLSKNY. The span at 413–469 shows a compositional bias: low complexity; sequence STTTTTTNNNNNNNNNNNNNNNNNNNNNSISQQQQTQVSTQQTQQQQNTTNGIGGAT. Positions 556 to 908 constitute a Histidine kinase domain; that stretch reads NISHELLSPM…TFHFILSIKS (353 aa). Residue His559 is modified to Phosphohistidine; by autocatalysis. 7 disordered regions span residues 711 to 821, 952 to 971, 1080 to 1124, 1157 to 1258, 1277 to 1301, 1330 to 1393, and 1419 to 1520; these read NSKT…KREK, TKKV…TNYG, NGNN…KQHS, PPKS…ILSP, SLTP…INNG, ASSP…NLSS, and SNNL…PPIL. 2 stretches are compositionally biased toward acidic residues: residues 725-735 and 758-789; these read SIDGDYDDQDN and ELDE…DDDT. Low complexity-rich tracts occupy residues 790 to 807, 961 to 971, and 1080 to 1096; these read SSNT…FHNN, DNGNNDSTNYG, and NGNN…NNNI. Positions 1097-1117 are enriched in polar residues; the sequence is QTPNGLNNSRGSSLISTPSTK. 2 stretches are compositionally biased toward low complexity: residues 1186 to 1195 and 1202 to 1258; these read SSPPINSSSS and TNGS…ILSP. Over residues 1330–1339 the composition is skewed to polar residues; it reads ASSPKQSQRG. Low complexity-rich tracts occupy residues 1340–1376, 1425–1475, 1482–1492, and 1506–1520; these read YSPK…QQQQ, NNNN…STPE, SPRSNNNNNCS, and SSTI…PPIL. One can recognise a Response regulatory domain in the interval 1551–1674; it reads KVLVAEDNTM…LLYEVINTQI (124 aa). Position 1605 is a 4-aspartylphosphate (Asp1605). Residues 1695–1722 show a composition bias toward low complexity; sequence NNNNNNTNNNNNNNNSSNPVNNNNSNSI. Residues 1695 to 1736 form a disordered region; that stretch reads NNNNNNTNNNNNNNNSSNPVNNNNSNSIDATQQELNNEKIRI.

In terms of processing, activation probably requires transfer of a phosphate group between a histidine in the kinase core (transmitter) domain and an aspartate of the receiver domain.

It catalyses the reaction ATP + protein L-histidine = ADP + protein N-phospho-L-histidine.. Acts as a receptor histidine kinase for a signal transduction pathway. This protein undergoes an ATP-dependent autophosphorylation at a conserved histidine residue in the kinase core, and a phosphoryl group is then transferred to a conserved aspartate residue in the receiver domain. This is Hybrid signal transduction histidine kinase I (dhkI-1) from Dictyostelium discoideum (Social amoeba).